The chain runs to 441 residues: Transcriptional regulatory protein ZraR (441 aa).

Residues 7 to 121 (DILVVDDDIS…NLQATLEKAL (115 aa)) enclose the Response regulatory domain. D56 is modified (4-aspartylphosphate). Positions 141-370 (MVGKSPAMQH…LENAVERAVV (230 aa)) constitute a Sigma-54 factor interaction domain. Positions 172, 173, 329, and 359 each coordinate ATP. The H-T-H motif DNA-binding region spans 421–440 (KTEAARQLGITRKTLLAKLS).

In terms of assembly, monomer. In terms of processing, phosphorylated by ZraS.

Its subcellular location is the cytoplasm. With respect to regulation, activity of the ZraS/ZraR two-component system is repressed by the zinc-bound form of ZraP, which probably interacts with the periplasmic region of ZraS. Functionally, part of the Zra signaling pathway, an envelope stress response (ESR) system composed of the periplasmic accessory protein ZraP, the histidine kinase ZraS and the transcriptional regulator ZraR. The ZraPSR system contributes to antibiotic resistance and is important for membrane integrity in the presence of membrane-targeting biocides. ZraR is a member of the two-component regulatory system ZraS/ZraR. When activated by ZraS, acts in conjunction with sigma-54 to regulate the expression of zraP in the presence of high Zn(2+) or Pb(2+) concentrations. Also positively autoregulates the expression of the zraSR operon. Binds to a region within the zraP-zraSR intergenic region that is characterized by two inverted repeats separated by a 14 bp spacer. In addition, controls a regulon of genes of diverse functions that may be critical to maintain envelope integrity and cell survival under stressful conditions. The system has no direct role in zinc or copper resistance. In Escherichia coli (strain K12), this protein is Transcriptional regulatory protein ZraR.